We begin with the raw amino-acid sequence, 497 residues long: Glutamyl-tRNA(Gln) amidotransferase subunit A (497 aa).

Residues Lys-85 and Ser-160 each act as charge relay system in the active site. Ser-184 serves as the catalytic Acyl-ester intermediate.

It belongs to the amidase family. GatA subfamily. In terms of assembly, heterotrimer of A, B and C subunits.

It catalyses the reaction L-glutamyl-tRNA(Gln) + L-glutamine + ATP + H2O = L-glutaminyl-tRNA(Gln) + L-glutamate + ADP + phosphate + H(+). Allows the formation of correctly charged Gln-tRNA(Gln) through the transamidation of misacylated Glu-tRNA(Gln) in organisms which lack glutaminyl-tRNA synthetase. The reaction takes place in the presence of glutamine and ATP through an activated gamma-phospho-Glu-tRNA(Gln). In Mycobacterium leprae (strain TN), this protein is Glutamyl-tRNA(Gln) amidotransferase subunit A (gatA).